Reading from the N-terminus, the 283-residue chain is Pantothenate synthetase (283 aa).

30-37 (MGYLHDGH) contributes to the ATP binding site. Histidine 37 acts as the Proton donor in catalysis. A (R)-pantoate-binding site is contributed by glutamine 61. Glutamine 61 is a beta-alanine binding site. ATP is bound at residue 147-150 (GKKD). Glutamine 153 is a binding site for (R)-pantoate. ATP contacts are provided by residues isoleucine 176 and 184–187 (MSSR).

Belongs to the pantothenate synthetase family. As to quaternary structure, homodimer.

It is found in the cytoplasm. The catalysed reaction is (R)-pantoate + beta-alanine + ATP = (R)-pantothenate + AMP + diphosphate + H(+). It functions in the pathway cofactor biosynthesis; (R)-pantothenate biosynthesis; (R)-pantothenate from (R)-pantoate and beta-alanine: step 1/1. In terms of biological role, catalyzes the condensation of pantoate with beta-alanine in an ATP-dependent reaction via a pantoyl-adenylate intermediate. The chain is Pantothenate synthetase from Geobacter sulfurreducens (strain ATCC 51573 / DSM 12127 / PCA).